A 438-amino-acid polypeptide reads, in one-letter code: Putative F-box protein At5g15660 (438 aa).

Residues 1–24 (MRRRSKKIKTENNSNPETSEERNK) are disordered. Residues 22-68 (RNKFDEIPHDLVIEILERLPLKSVARFLTVSKLWATTIRSPDFRKSY) enclose the F-box domain.

This chain is Putative F-box protein At5g15660, found in Arabidopsis thaliana (Mouse-ear cress).